The sequence spans 594 residues: Aspartate--tRNA(Asp/Asn) ligase (594 aa).

E175 lines the L-aspartate pocket. The aspartate stretch occupies residues 199 to 202 (QQFK). L-aspartate contacts are provided by R221 and H455. ATP is bound at residue 221-223 (RDE). ATP is bound at residue E489. Position 496 (R496) interacts with L-aspartate. 541–544 (GIDR) is a binding site for ATP.

The protein belongs to the class-II aminoacyl-tRNA synthetase family. Type 1 subfamily. As to quaternary structure, homodimer.

It localises to the cytoplasm. It catalyses the reaction tRNA(Asx) + L-aspartate + ATP = L-aspartyl-tRNA(Asx) + AMP + diphosphate. Aspartyl-tRNA synthetase with relaxed tRNA specificity since it is able to aspartylate not only its cognate tRNA(Asp) but also tRNA(Asn). Reaction proceeds in two steps: L-aspartate is first activated by ATP to form Asp-AMP and then transferred to the acceptor end of tRNA(Asp/Asn). The protein is Aspartate--tRNA(Asp/Asn) ligase of Pelagibacter ubique (strain HTCC1062).